A 406-amino-acid polypeptide reads, in one-letter code: Testis-specific Y-encoded-like protein 4 (406 aa).

Disordered stretches follow at residues 1-63 (MNGV…EHCG), 81-121 (GLED…AKPK), 161-189 (EAGAAMQEKKGLQKEKKVAGGGKEETRPR), and 387-406 (VRVPPRQPVESPRSFRFQSG). Residues 8–20 (NELSLANTTTPSH) are compositionally biased toward polar residues. The span at 93-102 (DAPSAPVAAD) shows a compositional bias: low complexity. A compositionally biased stretch (basic and acidic residues) spans 167-188 (QEKKGLQKEKKVAGGGKEETRP).

This sequence belongs to the nucleosome assembly protein (NAP) family.

The chain is Testis-specific Y-encoded-like protein 4 (Tspyl4) from Mus musculus (Mouse).